Reading from the N-terminus, the 1407-residue chain is DNA-directed RNA polymerase subunit beta' (1407 aa).

Zn(2+) contacts are provided by Cys70, Cys72, Cys85, and Cys88. Asp460, Asp462, and Asp464 together coordinate Mg(2+). Zn(2+)-binding residues include Cys814, Cys888, Cys895, and Cys898. The residue at position 972 (Lys972) is an N6-acetyllysine.

It belongs to the RNA polymerase beta' chain family. As to quaternary structure, the RNAP catalytic core consists of 2 alpha, 1 beta, 1 beta' and 1 omega subunit. When a sigma factor is associated with the core the holoenzyme is formed, which can initiate transcription. Mg(2+) is required as a cofactor. Requires Zn(2+) as cofactor.

The enzyme catalyses RNA(n) + a ribonucleoside 5'-triphosphate = RNA(n+1) + diphosphate. DNA-dependent RNA polymerase catalyzes the transcription of DNA into RNA using the four ribonucleoside triphosphates as substrates. The chain is DNA-directed RNA polymerase subunit beta' from Shigella boydii serotype 18 (strain CDC 3083-94 / BS512).